We begin with the raw amino-acid sequence, 591 residues long: V-type ATP synthase alpha chain (591 aa).

Gly232 to Thr239 is a binding site for ATP.

It belongs to the ATPase alpha/beta chains family.

It carries out the reaction ATP + H2O + 4 H(+)(in) = ADP + phosphate + 5 H(+)(out). Functionally, produces ATP from ADP in the presence of a proton gradient across the membrane. The V-type alpha chain is a catalytic subunit. This Nitrosococcus oceani (strain ATCC 19707 / BCRC 17464 / JCM 30415 / NCIMB 11848 / C-107) protein is V-type ATP synthase alpha chain.